A 102-amino-acid polypeptide reads, in one-letter code: Small ribosomal subunit protein uS10 (102 aa).

It belongs to the universal ribosomal protein uS10 family. As to quaternary structure, part of the 30S ribosomal subunit.

Involved in the binding of tRNA to the ribosomes. In Streptococcus equi subsp. zooepidemicus (strain MGCS10565), this protein is Small ribosomal subunit protein uS10.